The following is a 346-amino-acid chain: Ketol-acid reductoisomerase (NADP(+)) (346 aa).

The KARI N-terminal Rossmann domain occupies 1–189 (MQVYYDRDAD…GGGRSGIIET (189 aa)). NADP(+) contacts are provided by residues 24–27 (YGSQ), Arg-48, Ser-51, Thr-53, and 83–86 (DEHQ). The active site involves His-108. Gly-134 lines the NADP(+) pocket. Residues 190 to 335 (TFKEECETDL…EKLRAMMPWI (146 aa)) form the KARI C-terminal knotted domain. Mg(2+) is bound by residues Asp-198, Glu-202, Glu-234, and Glu-238. Ser-259 provides a ligand contact to substrate.

This sequence belongs to the ketol-acid reductoisomerase family. Mg(2+) serves as cofactor.

It carries out the reaction (2R)-2,3-dihydroxy-3-methylbutanoate + NADP(+) = (2S)-2-acetolactate + NADPH + H(+). The catalysed reaction is (2R,3R)-2,3-dihydroxy-3-methylpentanoate + NADP(+) = (S)-2-ethyl-2-hydroxy-3-oxobutanoate + NADPH + H(+). It functions in the pathway amino-acid biosynthesis; L-isoleucine biosynthesis; L-isoleucine from 2-oxobutanoate: step 2/4. Its pathway is amino-acid biosynthesis; L-valine biosynthesis; L-valine from pyruvate: step 2/4. Functionally, involved in the biosynthesis of branched-chain amino acids (BCAA). Catalyzes an alkyl-migration followed by a ketol-acid reduction of (S)-2-acetolactate (S2AL) to yield (R)-2,3-dihydroxy-isovalerate. In the isomerase reaction, S2AL is rearranged via a Mg-dependent methyl migration to produce 3-hydroxy-3-methyl-2-ketobutyrate (HMKB). In the reductase reaction, this 2-ketoacid undergoes a metal-dependent reduction by NADPH to yield (R)-2,3-dihydroxy-isovalerate. The polypeptide is Ketol-acid reductoisomerase (NADP(+)) (Sphingopyxis alaskensis (strain DSM 13593 / LMG 18877 / RB2256) (Sphingomonas alaskensis)).